Reading from the N-terminus, the 1342-residue chain is DNA-directed RNA polymerase subunit beta (1342 aa).

It belongs to the RNA polymerase beta chain family. As to quaternary structure, the RNAP catalytic core consists of 2 alpha, 1 beta, 1 beta' and 1 omega subunit. When a sigma factor is associated with the core the holoenzyme is formed, which can initiate transcription.

The enzyme catalyses RNA(n) + a ribonucleoside 5'-triphosphate = RNA(n+1) + diphosphate. Functionally, DNA-dependent RNA polymerase catalyzes the transcription of DNA into RNA using the four ribonucleoside triphosphates as substrates. This is DNA-directed RNA polymerase subunit beta from Photorhabdus laumondii subsp. laumondii (strain DSM 15139 / CIP 105565 / TT01) (Photorhabdus luminescens subsp. laumondii).